The chain runs to 94 residues: UPF0298 protein SZO_03600 (94 aa).

The protein belongs to the UPF0298 family.

The protein localises to the cytoplasm. The polypeptide is UPF0298 protein SZO_03600 (Streptococcus equi subsp. zooepidemicus (strain H70)).